The primary structure comprises 283 residues: ATP phosphoribosyltransferase (283 aa).

This sequence belongs to the ATP phosphoribosyltransferase family. Long subfamily. Mg(2+) is required as a cofactor.

It localises to the cytoplasm. The enzyme catalyses 1-(5-phospho-beta-D-ribosyl)-ATP + diphosphate = 5-phospho-alpha-D-ribose 1-diphosphate + ATP. The protein operates within amino-acid biosynthesis; L-histidine biosynthesis; L-histidine from 5-phospho-alpha-D-ribose 1-diphosphate: step 1/9. With respect to regulation, feedback inhibited by histidine. Its function is as follows. Catalyzes the condensation of ATP and 5-phosphoribose 1-diphosphate to form N'-(5'-phosphoribosyl)-ATP (PR-ATP). Has a crucial role in the pathway because the rate of histidine biosynthesis seems to be controlled primarily by regulation of HisG enzymatic activity. The sequence is that of ATP phosphoribosyltransferase from Parabacteroides distasonis (strain ATCC 8503 / DSM 20701 / CIP 104284 / JCM 5825 / NCTC 11152).